The chain runs to 132 residues: Small ribosomal subunit protein bS6 (132 aa).

The interval aspartate 94–aspartate 132 is disordered. The segment covering aspartate 122 to aspartate 132 has biased composition (acidic residues).

The protein belongs to the bacterial ribosomal protein bS6 family.

Binds together with bS18 to 16S ribosomal RNA. The sequence is that of Small ribosomal subunit protein bS6 from Psychrobacter arcticus (strain DSM 17307 / VKM B-2377 / 273-4).